The following is a 1006-amino-acid chain: Multiple C2 domain and transmembrane region protein 9 (1006 aa).

The C2 1 domain maps to 1-108 (MSNIKLGVEV…PRSEAAPFNY (108 aa)). Positions 135–156 (VTPSVPTPVPESPQAYSPSPRK) are disordered. 3 consecutive C2 domains span residues 251 to 371 (RGTE…PQWY), 411 to 536 (SDSS…DRWV), and 579 to 704 (NSSD…THAY). The Ca(2+) site is built by Asp284, Asp290, Asp337, Asp339, and Asp344. 2 helical membrane passes run 842 to 862 (MLVTFPEMILPTVFLYMAVIG) and 946 to 966 (ATAIFVTFCFIIAMALYITPF).

The protein belongs to the MCTP family. Ca(2+) is required as a cofactor. Expressed in incipient leaf primordia and roots meristems. Observed in flowers.

Its subcellular location is the cell membrane. It is found in the cytoplasm. In terms of biological role, may function as a signaling molecule by regulating the trafficking of other regulators. This Arabidopsis thaliana (Mouse-ear cress) protein is Multiple C2 domain and transmembrane region protein 9.